A 173-amino-acid polypeptide reads, in one-letter code: Co-chaperone protein HscB homolog (173 aa).

The J domain maps to 5 to 77 (CHFALFDLQP…PRRARYLLAI (73 aa)).

This sequence belongs to the HscB family. Interacts with HscA and stimulates its ATPase activity.

Its function is as follows. Co-chaperone involved in the maturation of iron-sulfur cluster-containing proteins. Seems to help targeting proteins to be folded toward HscA. The sequence is that of Co-chaperone protein HscB homolog from Pseudomonas putida (strain W619).